Consider the following 237-residue polypeptide: tRNA1(Val) (adenine(37)-N6)-methyltransferase (237 aa).

Belongs to the methyltransferase superfamily. tRNA (adenine-N(6)-)-methyltransferase family.

The protein localises to the cytoplasm. It catalyses the reaction adenosine(37) in tRNA1(Val) + S-adenosyl-L-methionine = N(6)-methyladenosine(37) in tRNA1(Val) + S-adenosyl-L-homocysteine + H(+). Its function is as follows. Specifically methylates the adenine in position 37 of tRNA(1)(Val) (anticodon cmo5UAC). The chain is tRNA1(Val) (adenine(37)-N6)-methyltransferase from Bacteroides thetaiotaomicron (strain ATCC 29148 / DSM 2079 / JCM 5827 / CCUG 10774 / NCTC 10582 / VPI-5482 / E50).